The primary structure comprises 80 residues: Putative DNA-directed RNA polymerase subunit omega (80 aa).

Belongs to the RNA polymerase subunit omega family.

Its subcellular location is the plastid. The protein resides in the chloroplast. The catalysed reaction is RNA(n) + a ribonucleoside 5'-triphosphate = RNA(n+1) + diphosphate. Its function is as follows. May be involved in RNA polymerase activity. This is Putative DNA-directed RNA polymerase subunit omega from Gracilaria tenuistipitata var. liui (Red alga).